A 542-amino-acid chain; its full sequence is Chaperonin GroEL (542 aa).

ATP contacts are provided by residues 29–32 (TLGP), 86–90 (DGTTT), glycine 414, and aspartate 491.

The protein belongs to the chaperonin (HSP60) family. As to quaternary structure, forms a cylinder of 14 subunits composed of two heptameric rings stacked back-to-back. Interacts with the co-chaperonin GroES.

The protein resides in the cytoplasm. It catalyses the reaction ATP + H2O + a folded polypeptide = ADP + phosphate + an unfolded polypeptide.. Functionally, together with its co-chaperonin GroES, plays an essential role in assisting protein folding. The GroEL-GroES system forms a nano-cage that allows encapsulation of the non-native substrate proteins and provides a physical environment optimized to promote and accelerate protein folding. This chain is Chaperonin GroEL, found in Desulforamulus reducens (strain ATCC BAA-1160 / DSM 100696 / MI-1) (Desulfotomaculum reducens).